The sequence spans 713 residues: MYRLGSQGRSIQSQLQNGDSSSGRPLQLQGTGMREAQRIPQQLDYLLAEIISPNEDTNVIGYLAYYYPKLKNEQNVALLTDFFLRCPTYFSHSNVVSLRNNYPVMEAFNYIMTTKFKVSQPTVPFYRFYAAVLASLLNCEKTDPSHHWKLIPILTGVLLSIKGRDDVELYPDHSRSIKGSDTAVAQLLQRCLLRFYQSGDARSYDLNALVIISMSCALDYVEDDTIKKILYCFNYTRAIIDLIYYSPYGLNDSDIPLLSDSSVNSQSFDQLLNNNPALKHLNRLSFLFERTVKLNDGSIQSNLNDIDISLNKMQSFSEKLSKKISVLDDDSSKGVGQLLRQCLYASIIIHQAILTTFFQLDNADYTKYFLPSFSRKILSILFNLFFIVDRIGTGGFQPYNFVYLTCLQGIIQYDMKTAESLVKTFTTGINYSSLKDSEVARAKLLFTLNLMEQIVNICSDDLRLELIVPLVEDLVNNKNACVDIHNHVFKSIFESAHSVILKFFTVVDSSVKNVDYETNVTLVSEKIIPYLTLVIDQFPEFLSINQLDIAIETISRTVFPDSPIYSYDKNISSMFLNVLFNKCLTVDNDELVELPAIEAVVAPKNDEENNTSDAQDGGPKELQSLNDLKSRRSALISALISVFPLIPVKDYTKWLSIAFYDLIVATPERTERAFLQERLWDCVVGTNKYDPQKGNLGIMWWYENVNAQSTAKL.

The segment at Met1 to Thr31 is disordered. Residues Gln7–Gly30 are compositionally biased toward polar residues. The Microbody targeting signal motif lies at Ala711–Leu713.

As to quaternary structure, interacts with PEX5 (via N-terminus).

It localises to the peroxisome membrane. In terms of biological role, essential component of the machinery required for the import of both PTS1 and PTS2 (and perhaps all) peroxisomal matrix proteins. Binding of PEX8 to the N-terminus of PEX5 cargo receptor induces a conformational change of the TPR domains and decrease their binding affinity to cargo, facilitating the release of the PTS1 proteins within the peroxisome. The sequence is that of Peroxisomal biogenesis factor 8 from Komagataella phaffii (strain GS115 / ATCC 20864) (Yeast).